The sequence spans 457 residues: Siroheme synthase 2 (457 aa).

The tract at residues 1-204 (MDHLPIFCQL…DDRQAVADTT (204 aa)) is precorrin-2 dehydrogenase /sirohydrochlorin ferrochelatase. NAD(+) contacts are provided by residues 22–23 (DV) and 43–44 (LD). Ser-128 is modified (phosphoserine). Residues 216–457 (GEVVLVGAGP…RDKLNWFSNH (242 aa)) are uroporphyrinogen-III C-methyltransferase. Position 225 (Pro-225) interacts with S-adenosyl-L-methionine. Residue Asp-248 is the Proton acceptor of the active site. The active-site Proton donor is the Lys-270. S-adenosyl-L-methionine-binding positions include 301 to 303 (GGD), Ile-306, 331 to 332 (TA), Met-382, and Gly-411.

This sequence in the N-terminal section; belongs to the precorrin-2 dehydrogenase / sirohydrochlorin ferrochelatase family. The protein in the C-terminal section; belongs to the precorrin methyltransferase family.

The enzyme catalyses uroporphyrinogen III + 2 S-adenosyl-L-methionine = precorrin-2 + 2 S-adenosyl-L-homocysteine + H(+). It catalyses the reaction precorrin-2 + NAD(+) = sirohydrochlorin + NADH + 2 H(+). It carries out the reaction siroheme + 2 H(+) = sirohydrochlorin + Fe(2+). It participates in cofactor biosynthesis; adenosylcobalamin biosynthesis; precorrin-2 from uroporphyrinogen III: step 1/1. The protein operates within cofactor biosynthesis; adenosylcobalamin biosynthesis; sirohydrochlorin from precorrin-2: step 1/1. It functions in the pathway porphyrin-containing compound metabolism; siroheme biosynthesis; precorrin-2 from uroporphyrinogen III: step 1/1. Its pathway is porphyrin-containing compound metabolism; siroheme biosynthesis; siroheme from sirohydrochlorin: step 1/1. It participates in porphyrin-containing compound metabolism; siroheme biosynthesis; sirohydrochlorin from precorrin-2: step 1/1. In terms of biological role, multifunctional enzyme that catalyzes the SAM-dependent methylations of uroporphyrinogen III at position C-2 and C-7 to form precorrin-2 via precorrin-1. Then it catalyzes the NAD-dependent ring dehydrogenation of precorrin-2 to yield sirohydrochlorin. Finally, it catalyzes the ferrochelation of sirohydrochlorin to yield siroheme. The chain is Siroheme synthase 2 from Klebsiella pneumoniae subsp. pneumoniae (strain ATCC 700721 / MGH 78578).